An 88-amino-acid chain; its full sequence is Acyl-CoA-binding domain-containing protein 7 (88 aa).

In terms of domain architecture, ACB spans 3-88 (LQADFDQAAQ…ARELIEKYGI (86 aa)). Residues Arg-15, 30 to 34 (YGLYK), Lys-56, and Tyr-75 contribute to the an acyl-CoA site.

It belongs to the ACBD7 family.

In terms of biological role, binds medium- and long-chain acyl-CoA esters. This chain is Acyl-CoA-binding domain-containing protein 7 (Acbd7), found in Mus musculus (Mouse).